The chain runs to 269 residues: UPF0761 membrane protein NTHI0384 (269 aa).

Helical transmembrane passes span 32-52 (MLAI…FPVF), 89-109 (MSAV…NNID), 128-148 (FAIY…SIGI), 168-188 (LLSF…YTVV), 203-223 (FLAA…VVTF), and 232-252 (AMAT…VVLV).

Belongs to the UPF0761 family.

It localises to the cell inner membrane. In Haemophilus influenzae (strain 86-028NP), this protein is UPF0761 membrane protein NTHI0384.